Consider the following 144-residue polypeptide: Cell division protein SepF (144 aa).

Over residues 14–31 the composition is skewed to acidic residues; the sequence is EDDEMNEVPYTESEEQQE. The disordered stretch occupies residues 14–41; that stretch reads EDDEMNEVPYTESEEQQEEIPQTQKNER.

It belongs to the SepF family. In terms of assembly, homodimer. Interacts with FtsZ.

It localises to the cytoplasm. Functionally, cell division protein that is part of the divisome complex and is recruited early to the Z-ring. Probably stimulates Z-ring formation, perhaps through the cross-linking of FtsZ protofilaments. Its function overlaps with FtsA. This Lactobacillus johnsonii (strain CNCM I-12250 / La1 / NCC 533) protein is Cell division protein SepF.